A 118-amino-acid polypeptide reads, in one-letter code: Large ribosomal subunit protein eL18 (118 aa).

It belongs to the eukaryotic ribosomal protein eL18 family.

This is Large ribosomal subunit protein eL18 (rpl18e) from Sulfolobus acidocaldarius (strain ATCC 33909 / DSM 639 / JCM 8929 / NBRC 15157 / NCIMB 11770).